Consider the following 611-residue polypeptide: Endo-1,4-beta-xylanase A (611 aa).

A signal peptide spans 1 to 26 (MRTAMAKSLGAAAFLGAALFAHTLAA). The region spanning 27-128 (QTATCSYNIT…SVGGSICSGS (102 aa)) is the CBM2 domain. Intrachain disulfides connect Cys31/Cys125, Cys184/Cys215, and Cys194/Cys209. Residues 183–212 (QCNWYGTLYPLCVTTTNGWGWEDQRSCIAR) form the CBM10 domain. The GH10 domain maps to 281-607 (SGGNADIFTS…KPAYQGVVEA (327 aa)). Glu391 acts as the Proton donor in catalysis. The active-site Nucleophile is Glu510.

The protein belongs to the glycosyl hydrolase 10 (cellulase F) family.

The catalysed reaction is Endohydrolysis of (1-&gt;4)-beta-D-xylosidic linkages in xylans.. It participates in glycan degradation; xylan degradation. The polypeptide is Endo-1,4-beta-xylanase A (xynA) (Cellvibrio japonicus (strain Ueda107) (Pseudomonas fluorescens subsp. cellulosa)).